The sequence spans 396 residues: Tryptophan synthase beta chain (396 aa).

Lys88 carries the N6-(pyridoxal phosphate)lysine modification.

It belongs to the TrpB family. As to quaternary structure, tetramer of two alpha and two beta chains. Pyridoxal 5'-phosphate is required as a cofactor.

The catalysed reaction is (1S,2R)-1-C-(indol-3-yl)glycerol 3-phosphate + L-serine = D-glyceraldehyde 3-phosphate + L-tryptophan + H2O. The protein operates within amino-acid biosynthesis; L-tryptophan biosynthesis; L-tryptophan from chorismate: step 5/5. In terms of biological role, the beta subunit is responsible for the synthesis of L-tryptophan from indole and L-serine. This Shewanella sp. (strain W3-18-1) protein is Tryptophan synthase beta chain.